Here is a 517-residue protein sequence, read N- to C-terminus: Crotonobetaine/carnitine--CoA ligase (517 aa).

The protein belongs to the ATP-dependent AMP-binding enzyme family.

The catalysed reaction is 4-(trimethylamino)butanoate + ATP + CoA = 4-(trimethylamino)butanoyl-CoA + AMP + diphosphate. It carries out the reaction crotonobetaine + ATP + CoA = crotonobetainyl-CoA + AMP + diphosphate. It catalyses the reaction (R)-carnitine + ATP + CoA = (R)-carnitinyl-CoA + AMP + diphosphate. The protein operates within amine and polyamine metabolism; carnitine metabolism. Functionally, catalyzes the transfer of CoA to carnitine, generating the initial carnitinyl-CoA needed for the CaiB reaction cycle. Also has activity toward crotonobetaine and gamma-butyrobetaine. The sequence is that of Crotonobetaine/carnitine--CoA ligase from Escherichia coli O6:K15:H31 (strain 536 / UPEC).